The chain runs to 450 residues: Beta-glucosidase (450 aa).

Glutamate 166 functions as the Proton donor in the catalytic mechanism. Catalysis depends on glutamate 355, which acts as the Nucleophile.

It belongs to the glycosyl hydrolase 1 family.

It catalyses the reaction Hydrolysis of terminal, non-reducing beta-D-glucosyl residues with release of beta-D-glucose.. This chain is Beta-glucosidase (bglA), found in Niallia circulans (Bacillus circulans).